The sequence spans 109 residues: A-type ATP synthase subunit F (109 aa).

This sequence belongs to the V-ATPase F subunit family. In terms of assembly, has multiple subunits with at least A(3), B(3), C, D, E, F, H, I and proteolipid K(x).

It localises to the cell membrane. In terms of biological role, component of the A-type ATP synthase that produces ATP from ADP in the presence of a proton gradient across the membrane. This is A-type ATP synthase subunit F from Haloquadratum walsbyi (strain DSM 16790 / HBSQ001).